Reading from the N-terminus, the 347-residue chain is Selenide, water dikinase (347 aa).

Cysteine 17 is a catalytic residue. Residues lysine 20 and 48–50 each bind ATP; that span reads TRD. Aspartate 51 provides a ligand contact to Mg(2+). ATP is bound by residues aspartate 68, aspartate 91, and 139-141; that span reads GHS. A Mg(2+)-binding site is contributed by aspartate 91. Mg(2+) is bound at residue aspartate 227.

The protein belongs to the selenophosphate synthase 1 family. Class I subfamily. Homodimer. Mg(2+) is required as a cofactor.

It carries out the reaction hydrogenselenide + ATP + H2O = selenophosphate + AMP + phosphate + 2 H(+). Its function is as follows. Synthesizes selenophosphate from selenide and ATP. This is Selenide, water dikinase from Escherichia coli O9:H4 (strain HS).